The chain runs to 472 residues: Siroheme synthase (472 aa).

The segment at Met1–Met204 is precorrin-2 dehydrogenase /sirohydrochlorin ferrochelatase. Residues Ser22 to Ile23 and Leu43 to Glu44 each bind NAD(+). At Ser128 the chain carries Phosphoserine. Residues Gly215 to Ala472 are uroporphyrinogen-III C-methyltransferase. Pro224 is a binding site for S-adenosyl-L-methionine. The active-site Proton acceptor is Asp247. Lys269 acts as the Proton donor in catalysis. S-adenosyl-L-methionine is bound by residues Gly300–Asp302, Ile305, Thr330–Ala331, Met382, and Gly411.

In the N-terminal section; belongs to the precorrin-2 dehydrogenase / sirohydrochlorin ferrochelatase family. It in the C-terminal section; belongs to the precorrin methyltransferase family.

The catalysed reaction is uroporphyrinogen III + 2 S-adenosyl-L-methionine = precorrin-2 + 2 S-adenosyl-L-homocysteine + H(+). It catalyses the reaction precorrin-2 + NAD(+) = sirohydrochlorin + NADH + 2 H(+). It carries out the reaction siroheme + 2 H(+) = sirohydrochlorin + Fe(2+). The protein operates within cofactor biosynthesis; adenosylcobalamin biosynthesis; precorrin-2 from uroporphyrinogen III: step 1/1. It functions in the pathway cofactor biosynthesis; adenosylcobalamin biosynthesis; sirohydrochlorin from precorrin-2: step 1/1. It participates in porphyrin-containing compound metabolism; siroheme biosynthesis; precorrin-2 from uroporphyrinogen III: step 1/1. Its pathway is porphyrin-containing compound metabolism; siroheme biosynthesis; siroheme from sirohydrochlorin: step 1/1. The protein operates within porphyrin-containing compound metabolism; siroheme biosynthesis; sirohydrochlorin from precorrin-2: step 1/1. In terms of biological role, multifunctional enzyme that catalyzes the SAM-dependent methylations of uroporphyrinogen III at position C-2 and C-7 to form precorrin-2 via precorrin-1. Then it catalyzes the NAD-dependent ring dehydrogenation of precorrin-2 to yield sirohydrochlorin. Finally, it catalyzes the ferrochelation of sirohydrochlorin to yield siroheme. The protein is Siroheme synthase of Psychromonas ingrahamii (strain DSM 17664 / CCUG 51855 / 37).